A 434-amino-acid chain; its full sequence is Citrate-proton symporter (434 aa).

The Cytoplasmic segment spans residues 1–21 (MAQHTPATSRAGTFGAILRVT). A helical transmembrane segment spans residues 22–42 (SGNFLEQFDFFLFGFYATYIA). Residues 43-54 (RTFFPAESEFAS) are Periplasmic-facing. The helical transmembrane segment at 55 to 75 (LMLTFAVFGSGFLMRPVGAIV) threads the bilayer. Topologically, residues 76–87 (LGAYIDRIGRRK) are cytoplasmic. Residues 88-108 (GLMVTLAIMGCGTLLIALVPG) form a helical membrane-spanning segment. The Periplasmic portion of the chain corresponds to 109–111 (YQT). A helical membrane pass occupies residues 112–132 (IGLAAPALVLLGRLLQGFSAG). At 133 to 164 (VELGGVSVYLSEIATPGNKGFYTSWQSASQQV) the chain is on the cytoplasmic side. The helical transmembrane segment at 165 to 185 (AIVVAALIGYSLNITLGHDAI) threads the bilayer. Ser186 is a topological domain (periplasmic). The chain crosses the membrane as a helical span at residues 187-207 (EWGWRIPFFIGCMIIPLIFVL). The Cytoplasmic segment spans residues 208-238 (RRSLQETEAFLQRKHRPDTREIFATIAKNWR). The chain crosses the membrane as a helical span at residues 239–259 (IITAGTLLVAMTTTTFYFITV). Residues 260–276 (YTPTYGRTVLNLSARDS) lie on the Periplasmic side of the membrane. A helical transmembrane segment spans residues 277–297 (LIVTMLVGVSNFIWLPIGGAI). Residues 298–304 (SDRIGRR) are Cytoplasmic-facing. The helical transmembrane segment at 305–325 (AVLMGITLLALITTWPVMQWL) threads the bilayer. Residues 326–335 (TAAPDFTRMT) lie on the Periplasmic side of the membrane. A helical membrane pass occupies residues 336–356 (LVLLWFSFFFGMYNGAMVAAL). The Cytoplasmic segment spans residues 357-366 (TEVMPVYVRT). A helical membrane pass occupies residues 367–387 (VGFSLAFSLATAIFGGLTPAI). Over 388–400 (STALVKLTGDKSS) the chain is Periplasmic. The helical transmembrane segment at 401-421 (PGWWLMCAALCGLAATAMLFV) threads the bilayer. At 422–434 (RLSRGYIAAENKA) the chain is on the cytoplasmic side.

It belongs to the major facilitator superfamily. Metabolite:H+ Symporter (MHS) family (TC 2.A.1.6) family.

Its subcellular location is the cell inner membrane. Functionally, uptake of citrate across the boundary membrane with the concomitant transport of protons into the cell (symport system). The protein is Citrate-proton symporter (citA) of Salmonella typhi.